A 361-amino-acid polypeptide reads, in one-letter code: Aminomethyltransferase (361 aa).

The protein belongs to the GcvT family. The glycine cleavage system is composed of four proteins: P, T, L and H.

It carries out the reaction N(6)-[(R)-S(8)-aminomethyldihydrolipoyl]-L-lysyl-[protein] + (6S)-5,6,7,8-tetrahydrofolate = N(6)-[(R)-dihydrolipoyl]-L-lysyl-[protein] + (6R)-5,10-methylene-5,6,7,8-tetrahydrofolate + NH4(+). The glycine cleavage system catalyzes the degradation of glycine. The sequence is that of Aminomethyltransferase from Phocaeicola vulgatus (strain ATCC 8482 / DSM 1447 / JCM 5826 / CCUG 4940 / NBRC 14291 / NCTC 11154) (Bacteroides vulgatus).